The sequence spans 425 residues: Sensor histidine kinase NarS (425 aa).

6 helical membrane-spanning segments follow: residues 42–62 (IASV…VVGT), 71–91 (IVLI…AYSA), 107–127 (LEPF…QLLS), 130–150 (GIYP…DVST), 155–175 (VVLA…PVML), and 181–201 (PETI…LMVV). In terms of domain architecture, Histidine kinase spans 224-425 (QTMTASEVLQ…HVCVELPLKR (202 aa)). Residue His241 is modified to Phosphohistidine; by autocatalysis.

In terms of processing, autophosphorylated on His-241.

Its subcellular location is the cell membrane. It catalyses the reaction ATP + protein L-histidine = ADP + protein N-phospho-L-histidine.. Functionally, member of the two-component regulatory system NarS/NarL involved in gene expression during aerobic nitrate metabolism. Plays therefore a crucial role in anaerobic survival of mycobacteria in host. Functions as a sensor protein kinase which is autophosphorylated at a histidine residue and transfers its phosphate group to the conserved aspartic acid residue in the regulatory domain of NarL. In turn, NarL binds to the upstream promoter regions of target genes to regulate their expression during aerobic nitrate metabolism. In Mycobacterium tuberculosis (strain ATCC 25618 / H37Rv), this protein is Sensor histidine kinase NarS.